Here is a 104-residue protein sequence, read N- to C-terminus: Large ribosomal subunit protein bL21 (104 aa).

It belongs to the bacterial ribosomal protein bL21 family. As to quaternary structure, part of the 50S ribosomal subunit. Contacts protein L20.

Functionally, this protein binds to 23S rRNA in the presence of protein L20. The polypeptide is Large ribosomal subunit protein bL21 (Pseudomonas putida (strain W619)).